We begin with the raw amino-acid sequence, 256 residues long: Protein LIKE COV 1 (256 aa).

The segment covering 1 to 10 (MANRERDREL) has biased composition (basic and acidic residues). The interval 1–39 (MANRERDRELLIPVADFGDKDDGSSSKPSSSSSASSSHQ) is disordered. At 1–60 (MANRERDRELLIPVADFGDKDDGSSSKPSSSSSASSSHQSGHETLSLFIRGWASKKFMTG) the chain is on the cytoplasmic side. Low complexity predominate over residues 25 to 39 (SSKPSSSSSASSSHQ). The helical transmembrane segment at 61–81 (CVILLPIAVTFYTTWWFIHFV) threads the bilayer. The Extracellular portion of the chain corresponds to 82–93 (DGFFSPIYALLG). Residues 94 to 114 (INIFGFGFLTSIAFIFLVGVF) traverse the membrane as a helical segment. Over 115-256 (MSSWLGASVL…KPLASIGNES (142 aa)) the chain is Cytoplasmic.

This sequence belongs to the plant COV1 protein family. Expressed at low levels in flowers, stems, roots and leaves.

It localises to the membrane. The polypeptide is Protein LIKE COV 1 (Arabidopsis thaliana (Mouse-ear cress)).